The primary structure comprises 197 residues: Nucleoid occlusion factor SlmA (197 aa).

The HTH tetR-type domain maps to 7–67; sequence INRREHILQC…GLIDFIEESL (61 aa). Positions 30-49 form a DNA-binding region, H-T-H motif; the sequence is TTAKLAAEVGVSEAALYRHF.

Belongs to the nucleoid occlusion factor SlmA family. Homodimer. Interacts with FtsZ.

The protein localises to the cytoplasm. It localises to the nucleoid. In terms of biological role, required for nucleoid occlusion (NO) phenomenon, which prevents Z-ring formation and cell division over the nucleoid. Acts as a DNA-associated cell division inhibitor that binds simultaneously chromosomal DNA and FtsZ, and disrupts the assembly of FtsZ polymers. SlmA-DNA-binding sequences (SBS) are dispersed on non-Ter regions of the chromosome, preventing FtsZ polymerization at these regions. The protein is Nucleoid occlusion factor SlmA of Shewanella woodyi (strain ATCC 51908 / MS32).